A 39-amino-acid polypeptide reads, in one-letter code: Omega-theraphotoxin-Ba1b (39 aa).

Intrachain disulfides connect Cys-4–Cys-17, Cys-8–Cys-31, and Cys-25–Cys-36.

This sequence belongs to the neurotoxin 12 (Hwtx-2) family. 06 (TXP1) subfamily. As to expression, expressed by the venom gland.

The protein localises to the secreted. Inhibits voltage-gated calcium channels (Cav) in rat cerebellar granule cells. Has insecticidal activity to crickets (Acheta domesticus). Is not toxic to mice. In Brachypelma albiceps (Mexican golden redrump tarantula), this protein is Omega-theraphotoxin-Ba1b.